The following is a 127-amino-acid chain: uncharacterized protein (127 aa).

This is an uncharacterized protein from Caenorhabditis elegans.